The chain runs to 351 residues: MKFSIGVSLLATLAGAVNVDMAKRDTSPLNVKLEALGNSGVKAVLTNTGDSDIKLFKTGTFLDKSPVEKVEVFAAGSKIDFDGVRLQISTTGLTEEAFQIVAAGETFEVEFDAAELHDLSKGGAVDIVTQGSFLYADVDSTEIAGTIPFSSNSVHTEINGDEAASVRAAFLAKRTIVQSDCTGTRRTATVNAISRCRALAAAASQAAASGPVARMTEYFKSSTTATRNSVATVFRNIVSECGSTTSGVSRQYCTDVYGACSNGVIAYTVPAQNYMVNCPYFFNNMAAASSTCHAQDQQTTILHEMTHLRQIKGTSDYGGYGYNFVRSLSAAQNLNHADTYTLFAQSIYAGC.

The N-terminal stretch at 1–16 is a signal peptide; sequence MKFSIGVSLLATLAGA. A propeptide spanning residues 17–177 is cleaved from the precursor; that stretch reads VNVDMAKRDT…AAFLAKRTIV (161 aa). 2 disulfides stabilise this stretch: Cys181-Cys253 and Cys260-Cys278. Residue His303 coordinates Zn(2+). Glu304 is a catalytic residue. His307 contacts Zn(2+).

The protein belongs to the peptidase M35 family. The cofactor is Zn(2+).

The protein localises to the secreted. It catalyses the reaction Preferential cleavage of bonds with hydrophobic residues in P1'. Also 3-Asn-|-Gln-4 and 8-Gly-|-Ser-9 bonds in insulin B chain.. In terms of biological role, secreted metalloproteinase that allows assimilation of proteinaceous substrates. Shows high activities on basic nuclear substrates such as histone and protamine. This chain is Neutral protease 2 homolog MGG_10927, found in Colletotrichum graminicola (strain M1.001 / M2 / FGSC 10212) (Maize anthracnose fungus).